The sequence spans 249 residues: Probable phosphatase Shal_1519 (249 aa).

Zn(2+)-binding residues include His-8, His-10, His-16, His-41, Glu-74, His-102, His-132, Asp-193, and His-195.

This sequence belongs to the PHP family. Zn(2+) serves as cofactor.

This Shewanella halifaxensis (strain HAW-EB4) protein is Probable phosphatase Shal_1519.